Reading from the N-terminus, the 238-residue chain is Ethylene-responsive transcription factor ERN3 (238 aa).

Residues 24–81 (KFVGVRQRASGKWAAEIKDTSKNIRMWLGTYKTAEEAARAYDEAAFLLRGTNTRTNFS) constitute a DNA-binding region (AP2/ERF).

This sequence belongs to the AP2/ERF transcription factor family. ERF subfamily. Expressed in roots, root hairs and leaves.

It localises to the nucleus. Transcription factor involved in symbiotic nodule signaling in response to rhizobial Nod factors (NFs). Binds to the GCC box (NF-responsive box) of ENOD11 promoter. May act as transcriptional repressor of NF-responsive box-containing target gene promoters in root hairs. The protein is Ethylene-responsive transcription factor ERN3 of Medicago truncatula (Barrel medic).